The chain runs to 312 residues: CD-NTase-associated protein 12 (312 aa).

In terms of domain architecture, TIR spans 5-127; the sequence is RLFIGSSSEE…FNGLTLARFD (123 aa).

It in the C-terminal section; belongs to the bacterial STING family. In terms of assembly, forms homodimers; in the presence of c-di-GMP forms filaments with an ordered array of parallel-stacked subunits.

It catalyses the reaction NAD(+) + H2O = ADP-D-ribose + nicotinamide + H(+). With respect to regulation, NAD(+) hydrolase activity is strongly stimulated by c-di-GMP, weakly by 3'3'-cGAMP, very weakly by c-di-AMP but not at all by 2'3'-cGAMP. Self-association of TIR domains is required for NADase activity. Its function is as follows. Effector protein of a CBASS antiviral system with NAD(+) hydrolase activity. CBASS (cyclic oligonucleotide-based antiphage signaling system) provides immunity against bacteriophage. The CD-NTase protein synthesizes cyclic nucleotides in response to infection; these serve as specific second messenger signals. The signals activate a diverse range of effectors, leading to bacterial cell death and thus abortive phage infection. A type I-D CBASS(GG) system. In terms of biological role, binds c-di-GMP, does not bind cUMP-AMP. Upon activation by c-di-GMP forms filaments which hydrolyze NAD(+); filament formation is required for enzyme activation. This chain is CD-NTase-associated protein 12, found in Niabella drilacis (strain DSM 25811 / CCM 8410 / CCUG 62505 / LMG 26954 / E90).